A 604-amino-acid chain; its full sequence is MWWILLFLEWFVDWARGTFWYLFGRRSGLCKGTISPQGPLVVDQEKKDKVLQKEYASNEVPDNLDVIVIGSGIGGLTAAAVLARLGKKVLVLEQDKQAGGLCKTFTEKGFEFDCGFYYVGQLHENSFLKIALDLITDGQVHFAEQGSHVETVVIGKGPECKEYTIYNGKKQMEAHLKKQFPNDAKAVEEFFKIMKICSEKVRLLCMLKMVPLWFARFILRTGIADFISPILKYSRTSTSEVVKSLTSNQDLLTVFSKTFCGVPPKNSSCMIDALLLHHSKRGVYYPQGGASEIPYHIIQVLEKHGGKVLVNAPVSRVLVNEQQNAYGVAVKTGDEDIEIKASVVVSNAGVFTTFQKLLTPEIQADPQVQEYLKALKPGKGFFQVFAGFNATMEELGISSTDMRLYKGNNVDEMMEEYFASDKQDAPDNVPMMYLSFPSAKDPTSSTRFPGQSRMVIHTLVNPKWFEQWENVNEAERGEEYENYKMRFANHLFDWACVRFPQLKEKVALLHAVTPINMHGLGASYCSMSAEHNLERYQPLNIATIRCNTPVKNLYLSGQDIFTAGYSGALHGGFLCASTVMDRCLHIDLLLQQKKLKSKSVKKLE.

The N-terminal stretch at 1–17 is a signal peptide; sequence MWWILLFLEWFVDWARG.

It belongs to the carotenoid/retinoid oxidoreductase family. CrtISO subfamily.

The chain is Inactive all-trans-retinol 13,14-reductase (retsatl) from Danio rerio (Zebrafish).